Consider the following 453-residue polypeptide: Probable L-galactonate transporter (453 aa).

Residues 1-23 (MEKENITIDPRSSFTPSSSADIP) form a disordered region. The Periplasmic segment spans residues 1–42 (MEKENITIDPRSSFTPSSSADIPVPPDGLVQRSTRIKRIQTT). Residues 10–20 (PRSSFTPSSSA) show a composition bias toward polar residues. Residues 43-63 (AMLLLFFAAVINYLDRSSLSV) form a helical membrane-spanning segment. Residues 64–71 (ANLTIREE) lie on the Cytoplasmic side of the membrane. A helical membrane pass occupies residues 72–92 (LGLSATEIGALLSVFSLAYGI). The Periplasmic portion of the chain corresponds to 93-107 (AQLPCGPLLDRKGPR). A helical transmembrane segment spans residues 108–128 (LMLGLGMFFWSLFQAMSGMVH). Residues 129-174 (NFTQFVLVRIGMGIGEAPMNPCGVKVINDWFNIKERGRPMGFFNAA) are Cytoplasmic-facing. The chain crosses the membrane as a helical span at residues 175–195 (STIGVAVSPPILAAMMLVMGW). Arginine 196 is a topological domain (periplasmic). The chain crosses the membrane as a helical span at residues 197 to 217 (GMFITIGVLGIFLAIGWYMLY). Over 218–259 (RNREHVELTAVEQAYLNAGSVNARRDPLSFAEWRSLFRNRTM) the chain is Cytoplasmic. Residues 260–280 (WGMMLGFSGINYTAWLYLAWL) traverse the membrane as a helical segment. At 281-295 (PGYLQTAYNLDLKST) the chain is on the periplasmic side. Residues 296–316 (GLMAAIPFLFGAAGMLVNGYV) form a helical membrane-spanning segment. Residues 317 to 332 (TDWLVKGGMAPIKSRK) are Cytoplasmic-facing. A helical transmembrane segment spans residues 333–353 (ICIIAGMFCSAAFTLIVPQAT). Topologically, residues 354 to 359 (TSMTAV) are periplasmic. A helical transmembrane segment spans residues 360–380 (LLIGMALFCIHFAGTSCWGLI). Residues 381–394 (HVAVASRMTASVGS) are Cytoplasmic-facing. Residues 395-415 (IQNFASFICASFAPIITGFIV) traverse the membrane as a helical segment. Topologically, residues 416-422 (DTTHSFR) are periplasmic. Residues 423–443 (LALIICGCVTAAGALAYIFLV) traverse the membrane as a helical segment. The Cytoplasmic segment spans residues 444-453 (RQPINDPRKD).

It belongs to the major facilitator superfamily. Phthalate permease family.

It is found in the cell inner membrane. The enzyme catalyses L-galactonate(in) + H(+)(in) = L-galactonate(out) + H(+)(out). In terms of biological role, probably responsible for the transport of L-galactonate from the periplasm across the inner membrane. Is essential for growth on L-galactonate as the sole carbon source. The sequence is that of Probable L-galactonate transporter (lgoT) from Escherichia coli (strain K12).